Reading from the N-terminus, the 380-residue chain is Lipid-A-disaccharide synthase (380 aa).

Belongs to the LpxB family.

The enzyme catalyses a lipid X + a UDP-2-N,3-O-bis[(3R)-3-hydroxyacyl]-alpha-D-glucosamine = a lipid A disaccharide + UDP + H(+). It participates in bacterial outer membrane biogenesis; LPS lipid A biosynthesis. In terms of biological role, condensation of UDP-2,3-diacylglucosamine and 2,3-diacylglucosamine-1-phosphate to form lipid A disaccharide, a precursor of lipid A, a phosphorylated glycolipid that anchors the lipopolysaccharide to the outer membrane of the cell. This Francisella philomiragia subsp. philomiragia (strain ATCC 25017 / CCUG 19701 / FSC 153 / O#319-036) protein is Lipid-A-disaccharide synthase.